Reading from the N-terminus, the 182-residue chain is Adenine phosphoribosyltransferase (182 aa).

This sequence belongs to the purine/pyrimidine phosphoribosyltransferase family. In terms of assembly, homodimer.

The protein resides in the cytoplasm. It catalyses the reaction AMP + diphosphate = 5-phospho-alpha-D-ribose 1-diphosphate + adenine. It functions in the pathway purine metabolism; AMP biosynthesis via salvage pathway; AMP from adenine: step 1/1. In terms of biological role, catalyzes a salvage reaction resulting in the formation of AMP, that is energically less costly than de novo synthesis. This chain is Adenine phosphoribosyltransferase, found in Pseudomonas fluorescens (strain SBW25).